Consider the following 357-residue polypeptide: Isopenicillin-N N-acyltransferase (357 aa).

Positions 121 and 310 each coordinate 6-aminopenicillanate.

Belongs to the peptidase C45 family. As to quaternary structure, the active form of the enzyme results from processing of the 40-kDa monomeric precursor to a heterodimer containing subunits of 11 and 29 kDa. In terms of processing, the pre-AAT protein is synthesized as 40 kDa precursor which is then self-processed into an 11 kDa (protein A) and a 29 kDa (protein B). The B protein carries AAT activity.

The protein localises to the peroxisome matrix. It carries out the reaction isopenicillin N + phenylacetyl-CoA + H2O = penicillin G + L-2-aminoadipate + CoA + H(+). The protein operates within antibiotic biosynthesis; penicillin G biosynthesis; penicillin G from L-alpha-aminoadipate and L-cysteine and L-valine: step 3/3. In terms of biological role, isopenicillin-N N-acyltransferase; part of the gene cluster that mediates the biosynthesis of penicillin, the world's most important antibiotic. AatA catalyzes the exchange of the alpha-aminoadipyl side chain of isopenicillin N for phenylacetic acid to yield penicillin. This step occurs in the peroxisomal matrix and the penM and paaT transporters are involved in the isopenicillin N and phenylacetic acid import into the peroxisome, respectively. The penicillin biosynthesis occurs via 3 enzymatic steps, the first corresponding to the production of the tripeptide N-[(5S)-5-amino-5-carboxypentanoyl]-L-cysteinyl-D-valine (LLD-ACV or ACV) by the NRPS acvA. The tripeptide ACV is then cyclized to isopenicillin N (IPN) by the isopenicillin N synthase ipnA that forms the beta-lactam nucleus. Finally, the alpha-aminoadipyl side chain is exchanged for phenylacetic acid by the isopenicillin N acyltransferase aatA to yield penicillin in the peroxisomal matrix. This Penicillium chrysogenum (Penicillium notatum) protein is Isopenicillin-N N-acyltransferase.